Consider the following 152-residue polypeptide: TOMM20-like protein 1 (152 aa).

The Mitochondrial intermembrane portion of the chain corresponds to 1-6 (MPSVRL). The chain crosses the membrane as a helical span at residues 7–27 (GVGLLAGLAAGGAVVLLSYCV). Residues 28 to 152 (YLDWRRHRDP…STEHLKDDPD (125 aa)) are Cytoplasmic-facing.

The protein belongs to the Tom20 family.

The protein localises to the mitochondrion outer membrane. The sequence is that of TOMM20-like protein 1 (Tomm20l) from Mus musculus (Mouse).